Consider the following 425-residue polypeptide: MLDLDLIRNDTEKVKKALLKKIDNVDFTELLKLDDERRKLIHEVEVLKNKKNEASKQISNIKSQGGKVDESFFKDIKEISNKISELETSLEPIKGKMDTFLEALPNIPDEDVLPGGKENNKVVHVYGEKPQFEFEPKDHVELSNIHDLIDYKRGTKLSGNGFWIYKGYGAILEWALLNYFIEEHIKDGYEFILPPHILNYECGRTAGQFPKFKDEVFKVGSNGEGEGMQFILPTAETALVNLHRDEILKEDELPKKYFAYTPCYRVEAGSYRASERGMIRGHQFNKIEMFQYTKPEDSDAALEELIGKAEKLVKGLGLHYRLSKLAAADCSASMAKTYDIEVWIPSMNEYKEVSSASNARDYQARRGKIRFRREETKKIEYVNTLNASGLATSRVLPAILEQMQDKDGSIVVPEVLRKWVGKDKL.

Residue 234–236 (TAE) coordinates L-serine. 265–267 (RVE) contacts ATP. L-serine is bound at residue Glu-288. Residue 352 to 355 (EVSS) participates in ATP binding. Residue Ser-388 participates in L-serine binding.

It belongs to the class-II aminoacyl-tRNA synthetase family. Type-1 seryl-tRNA synthetase subfamily. As to quaternary structure, homodimer. The tRNA molecule binds across the dimer.

The protein localises to the cytoplasm. The catalysed reaction is tRNA(Ser) + L-serine + ATP = L-seryl-tRNA(Ser) + AMP + diphosphate + H(+). The enzyme catalyses tRNA(Sec) + L-serine + ATP = L-seryl-tRNA(Sec) + AMP + diphosphate + H(+). It functions in the pathway aminoacyl-tRNA biosynthesis; selenocysteinyl-tRNA(Sec) biosynthesis; L-seryl-tRNA(Sec) from L-serine and tRNA(Sec): step 1/1. Functionally, catalyzes the attachment of serine to tRNA(Ser). Is also able to aminoacylate tRNA(Sec) with serine, to form the misacylated tRNA L-seryl-tRNA(Sec), which will be further converted into selenocysteinyl-tRNA(Sec). The polypeptide is Serine--tRNA ligase 2 (Clostridium acetobutylicum (strain ATCC 824 / DSM 792 / JCM 1419 / IAM 19013 / LMG 5710 / NBRC 13948 / NRRL B-527 / VKM B-1787 / 2291 / W)).